Here is a 536-residue protein sequence, read N- to C-terminus: CTP synthase (536 aa).

An amidoligase domain region spans residues 1-267 (MTKYIFVTGG…DQIVCDHLKL (267 aa)). Serine 13 lines the CTP pocket. UTP is bound at residue serine 13. ATP is bound at residue 14–19 (SIGKGI). Tyrosine 54 lines the L-glutamine pocket. Aspartate 71 serves as a coordination point for ATP. Residues aspartate 71 and glutamate 141 each coordinate Mg(2+). Residues 148–150 (DIE), 188–193 (KTKPTQ), and lysine 224 contribute to the CTP site. Residues 188 to 193 (KTKPTQ) and lysine 224 each bind UTP. One can recognise a Glutamine amidotransferase type-1 domain in the interval 292–535 (KIALVGKYVE…ITAAVENSQA (244 aa)). Glycine 354 contributes to the L-glutamine binding site. The Nucleophile; for glutamine hydrolysis role is filled by cysteine 381. Residues 382 to 385 (LGMQ), glutamate 405, and arginine 463 each bind L-glutamine. Active-site residues include histidine 508 and glutamate 510.

This sequence belongs to the CTP synthase family. In terms of assembly, homotetramer.

It catalyses the reaction UTP + L-glutamine + ATP + H2O = CTP + L-glutamate + ADP + phosphate + 2 H(+). It carries out the reaction L-glutamine + H2O = L-glutamate + NH4(+). The catalysed reaction is UTP + NH4(+) + ATP = CTP + ADP + phosphate + 2 H(+). It participates in pyrimidine metabolism; CTP biosynthesis via de novo pathway; CTP from UDP: step 2/2. With respect to regulation, allosterically activated by GTP, when glutamine is the substrate; GTP has no effect on the reaction when ammonia is the substrate. The allosteric effector GTP functions by stabilizing the protein conformation that binds the tetrahedral intermediate(s) formed during glutamine hydrolysis. Inhibited by the product CTP, via allosteric rather than competitive inhibition. Its function is as follows. Catalyzes the ATP-dependent amination of UTP to CTP with either L-glutamine or ammonia as the source of nitrogen. Regulates intracellular CTP levels through interactions with the four ribonucleotide triphosphates. This chain is CTP synthase, found in Streptococcus mutans serotype c (strain ATCC 700610 / UA159).